Consider the following 341-residue polypeptide: Holliday junction branch migration complex subunit RuvB (341 aa).

The interval 3–184 is large ATPase domain (RuvB-L); sequence DDFDIRDARM…FGINMHLEYY (182 aa). Residues Leu-23, Arg-24, Gly-65, Lys-68, Thr-69, Thr-70, 131–133, Arg-174, Tyr-184, and Arg-221 each bind ATP; that span reads EDY. Mg(2+) is bound at residue Thr-69. The segment at 185–255 is small ATPAse domain (RuvB-S); that stretch reads DMETLTKIVL…IACFSLEALN (71 aa). The interval 258-341 is head domain (RuvB-H); the sequence is RYGLDQIDNK…RVGEQGFLFD (84 aa). DNA is bound by residues Arg-313 and Arg-318.

It belongs to the RuvB family. In terms of assembly, homohexamer. Forms an RuvA(8)-RuvB(12)-Holliday junction (HJ) complex. HJ DNA is sandwiched between 2 RuvA tetramers; dsDNA enters through RuvA and exits via RuvB. An RuvB hexamer assembles on each DNA strand where it exits the tetramer. Each RuvB hexamer is contacted by two RuvA subunits (via domain III) on 2 adjacent RuvB subunits; this complex drives branch migration. In the full resolvosome a probable DNA-RuvA(4)-RuvB(12)-RuvC(2) complex forms which resolves the HJ.

It is found in the cytoplasm. The catalysed reaction is ATP + H2O = ADP + phosphate + H(+). Its function is as follows. The RuvA-RuvB-RuvC complex processes Holliday junction (HJ) DNA during genetic recombination and DNA repair, while the RuvA-RuvB complex plays an important role in the rescue of blocked DNA replication forks via replication fork reversal (RFR). RuvA specifically binds to HJ cruciform DNA, conferring on it an open structure. The RuvB hexamer acts as an ATP-dependent pump, pulling dsDNA into and through the RuvAB complex. RuvB forms 2 homohexamers on either side of HJ DNA bound by 1 or 2 RuvA tetramers; 4 subunits per hexamer contact DNA at a time. Coordinated motions by a converter formed by DNA-disengaged RuvB subunits stimulates ATP hydrolysis and nucleotide exchange. Immobilization of the converter enables RuvB to convert the ATP-contained energy into a lever motion, pulling 2 nucleotides of DNA out of the RuvA tetramer per ATP hydrolyzed, thus driving DNA branch migration. The RuvB motors rotate together with the DNA substrate, which together with the progressing nucleotide cycle form the mechanistic basis for DNA recombination by continuous HJ branch migration. Branch migration allows RuvC to scan DNA until it finds its consensus sequence, where it cleaves and resolves cruciform DNA. This chain is Holliday junction branch migration complex subunit RuvB, found in Parabacteroides distasonis (strain ATCC 8503 / DSM 20701 / CIP 104284 / JCM 5825 / NCTC 11152).